Here is a 724-residue protein sequence, read N- to C-terminus: Ribosomal RNA large subunit methyltransferase K/L (724 aa).

Residues 42–153 (DAQRLVLWSR…KGRATLSVDL (112 aa)) form the THUMP domain.

This sequence belongs to the methyltransferase superfamily. RlmKL family.

Its subcellular location is the cytoplasm. It carries out the reaction guanosine(2445) in 23S rRNA + S-adenosyl-L-methionine = N(2)-methylguanosine(2445) in 23S rRNA + S-adenosyl-L-homocysteine + H(+). The catalysed reaction is guanosine(2069) in 23S rRNA + S-adenosyl-L-methionine = N(2)-methylguanosine(2069) in 23S rRNA + S-adenosyl-L-homocysteine + H(+). In terms of biological role, specifically methylates the guanine in position 2445 (m2G2445) and the guanine in position 2069 (m7G2069) of 23S rRNA. This is Ribosomal RNA large subunit methyltransferase K/L from Xylella fastidiosa (strain 9a5c).